We begin with the raw amino-acid sequence, 164 residues long: Phosphopantetheine adenylyltransferase (164 aa).

Serine 9 serves as a coordination point for substrate. ATP contacts are provided by residues 9–10 and histidine 17; that span reads SF. The substrate site is built by lysine 41, leucine 74, and arginine 88. Residues 89 to 91, glutamate 99, and 124 to 130 each bind ATP; these read GIR and YAEVSST.

It belongs to the bacterial CoaD family. As to quaternary structure, homohexamer. It depends on Mg(2+) as a cofactor.

It is found in the cytoplasm. It catalyses the reaction (R)-4'-phosphopantetheine + ATP + H(+) = 3'-dephospho-CoA + diphosphate. It functions in the pathway cofactor biosynthesis; coenzyme A biosynthesis; CoA from (R)-pantothenate: step 4/5. In terms of biological role, reversibly transfers an adenylyl group from ATP to 4'-phosphopantetheine, yielding dephospho-CoA (dPCoA) and pyrophosphate. In Chromobacterium violaceum (strain ATCC 12472 / DSM 30191 / JCM 1249 / CCUG 213 / NBRC 12614 / NCIMB 9131 / NCTC 9757 / MK), this protein is Phosphopantetheine adenylyltransferase.